Reading from the N-terminus, the 528-residue chain is Carboxysome shell carbonic anhydrase (528 aa).

The disordered stretch occupies residues 17–47 (PIAPNPRWQKENPTAHGSTDTGGFGYNGGNE). Cys-184 lines the Zn(2+) pocket. Asp-186 acts as the Proton acceptor in catalysis. 2 residues coordinate Zn(2+): His-252 and Cys-263.

It belongs to the beta-class carbonic anhydrase family. CsoSCA subfamily. As to quaternary structure, homodimer. The cofactor is Zn(2+).

It is found in the carboxysome. It catalyses the reaction hydrogencarbonate + H(+) = CO2 + H2O. With respect to regulation, inhibited by ethoxyzolamide and dithiothreitol (in crude extracts upon expression in E.coli). Its function is as follows. Reversible hydration of carbon dioxide. This bacteria encodes at least 3 CA enzymes. Essential for chemolithotrophic carbon dioxide fixation, supplies CO(2) to RuBisCO (ribulose bisphosphate carboxylase, cbbL-cbbS) in the carboxysome. The chain is Carboxysome shell carbonic anhydrase from Hydrogenovibrio crunogenus (strain DSM 25203 / XCL-2) (Thiomicrospira crunogena).